A 674-amino-acid chain; its full sequence is Dymeclin (674 aa).

G2 carries N-myristoyl glycine lipidation.

It belongs to the dymeclin family. As to quaternary structure, interacts with GOLM1 and PPIB. Post-translationally, myristoylated in vitro; myristoylation is not essential for protein targeting to Golgi compartment.

It localises to the cytoplasm. The protein localises to the golgi apparatus. Its subcellular location is the membrane. Necessary for correct organization of Golgi apparatus. Involved in bone development. The polypeptide is Dymeclin (Dym) (Rattus norvegicus (Rat)).